The chain runs to 542 residues: CTP synthase (542 aa).

An amidoligase domain region spans residues 1 to 265; sequence MTRYIFVTGG…DDFVVERFGL (265 aa). Ser13 is a CTP binding site. Ser13 serves as a coordination point for UTP. Residues 14-19 and Asp71 contribute to the ATP site; that span reads SLGKGI. Residues Asp71 and Glu139 each contribute to the Mg(2+) site. Residues 146–148, 186–191, and Lys222 each bind CTP; these read DIE and KTKPTQ. UTP-binding positions include 186–191 and Lys222; that span reads KTKPTQ. A Glutamine amidotransferase type-1 domain is found at 290-541; the sequence is TIAMVGKYME…VKAALAQKNK (252 aa). Gly351 provides a ligand contact to L-glutamine. Residue Cys378 is the Nucleophile; for glutamine hydrolysis of the active site. Residues 379–382, Glu402, and Arg469 contribute to the L-glutamine site; that span reads LGMQ. Active-site residues include His514 and Glu516.

This sequence belongs to the CTP synthase family. Homotetramer.

The enzyme catalyses UTP + L-glutamine + ATP + H2O = CTP + L-glutamate + ADP + phosphate + 2 H(+). The catalysed reaction is L-glutamine + H2O = L-glutamate + NH4(+). It carries out the reaction UTP + NH4(+) + ATP = CTP + ADP + phosphate + 2 H(+). It participates in pyrimidine metabolism; CTP biosynthesis via de novo pathway; CTP from UDP: step 2/2. Allosterically activated by GTP, when glutamine is the substrate; GTP has no effect on the reaction when ammonia is the substrate. The allosteric effector GTP functions by stabilizing the protein conformation that binds the tetrahedral intermediate(s) formed during glutamine hydrolysis. Inhibited by the product CTP, via allosteric rather than competitive inhibition. In terms of biological role, catalyzes the ATP-dependent amination of UTP to CTP with either L-glutamine or ammonia as the source of nitrogen. Regulates intracellular CTP levels through interactions with the four ribonucleotide triphosphates. The protein is CTP synthase of Pseudomonas putida (strain GB-1).